The sequence spans 356 residues: Phospho-N-acetylmuramoyl-pentapeptide-transferase (356 aa).

A run of 10 helical transmembrane segments spans residues 25–45, 70–90, 93–113, 138–158, 164–184, 195–215, 235–255, 258–278, 284–304, and 333–353; these read TVAAMLTSGLIVFLFGPSIIA, GTPTMGGLMILTGIVVSAFLW, LSNIYFWVSLFVMLSFGMIGF, FLIAIIAAFVLLQVGSSGLAL, YFINLSWFFLPFSAFVIVGTG, GLAIVPVMVAALSFALIAYLS, LAVLLGAVVGAGLGFLWFNAP, AIFMGDTGSLALGGLLGIVAV, IVLALIGGLFVLEGFSVVIQV, and QVVIRFWIISIVLALVGLSTL.

Belongs to the glycosyltransferase 4 family. MraY subfamily. It depends on Mg(2+) as a cofactor.

It is found in the cell inner membrane. The enzyme catalyses UDP-N-acetyl-alpha-D-muramoyl-L-alanyl-gamma-D-glutamyl-meso-2,6-diaminopimeloyl-D-alanyl-D-alanine + di-trans,octa-cis-undecaprenyl phosphate = di-trans,octa-cis-undecaprenyl diphospho-N-acetyl-alpha-D-muramoyl-L-alanyl-D-glutamyl-meso-2,6-diaminopimeloyl-D-alanyl-D-alanine + UMP. It functions in the pathway cell wall biogenesis; peptidoglycan biosynthesis. In terms of biological role, catalyzes the initial step of the lipid cycle reactions in the biosynthesis of the cell wall peptidoglycan: transfers peptidoglycan precursor phospho-MurNAc-pentapeptide from UDP-MurNAc-pentapeptide onto the lipid carrier undecaprenyl phosphate, yielding undecaprenyl-pyrophosphoryl-MurNAc-pentapeptide, known as lipid I. This Bartonella quintana (strain Toulouse) (Rochalimaea quintana) protein is Phospho-N-acetylmuramoyl-pentapeptide-transferase.